Reading from the N-terminus, the 404-residue chain is Activity-regulated cytoskeleton-associated protein (404 aa).

A coiled-coil region spans residues 51 to 78 (EVSKQVERELKGLQKSVGKLENNLEDHV). Positions 351 to 404 (VQGNMDHSEEPSPQRTPEIQSGDSVESMPPSTTASPVPSNGTQPEPPSPPATVI) are disordered. Residues 363 to 393 (PQRTPEIQSGDSVESMPPSTTASPVPSNGTQ) show a composition bias toward polar residues. The segment covering 394-404 (PEPPSPPATVI) has biased composition (pro residues).

This sequence belongs to the ARC/ARG3.1 family. Homooligomer; homooligomerizes into virion-like capsids. Post-translationally, palmitoylation anchors the protein into the membrane by allowing direct insertion into the hydrophobic core of the lipid bilayer. Expressed at various levels throughout the brain.

The protein localises to the extracellular vesicle membrane. Its subcellular location is the postsynaptic cell membrane. It localises to the synapse. The protein resides in the postsynaptic density. It is found in the early endosome membrane. The protein localises to the cell projection. Its subcellular location is the dendrite. It localises to the cytoplasm. The protein resides in the cytoskeleton. It is found in the cell cortex. The protein localises to the dendritic spine. Master regulator of synaptic plasticity that self-assembles into virion-like capsids that encapsulate RNAs and mediate intercellular RNA transfer in the nervous system. ARC protein is released from neurons in extracellular vesicles that mediate the transfer of ARC mRNA into new target cells, where ARC mRNA can undergo activity-dependent translation. ARC capsids are endocytosed and are able to transfer ARC mRNA into the cytoplasm of neurons. Acts as a key regulator of synaptic plasticity: required for protein synthesis-dependent forms of long-term potentiation (LTP) and depression (LTD) and for the formation of long-term memory. Regulates synaptic plasticity by promoting endocytosis of AMPA receptors (AMPARs) in response to synaptic activity: this endocytic pathway maintains levels of surface AMPARs in response to chronic changes in neuronal activity through synaptic scaling, thereby contributing to neuronal homeostasis. Acts as a postsynaptic mediator of activity-dependent synapse elimination in the developing cerebellum by mediating elimination of surplus climbing fiber synapses. Accumulates at weaker synapses, probably to prevent their undesired enhancement. This suggests that ARC-containing virion-like capsids may be required to eliminate synaptic material. The chain is Activity-regulated cytoskeleton-associated protein from Gallus gallus (Chicken).